The chain runs to 107 residues: Circadian clock oscillator protein KaiB (107 aa).

It belongs to the KaiB family. May undergo a major conformational rearrangment; in the free state forms homooligomers. When bound to KaiC switches to a monomeric thioredoxin-fold (KaiB(fs)). The active oscillator complex is probably KaiC(6):KaiB(6).

In terms of biological role, component of the KaiBC clock protein complex, which constitutes the main circadian regulator in cyanobacteria; it may modify the ATPase activity of KaiC. May be a metamorphic protein which reversibly switches between an inactive tetrameric fold and a rare, thioredoxin-like monomeric fold (KaiB(fs)). KaiB(fs) binds phospho-KaiC, and perhaps clock output effectors. The protein is Circadian clock oscillator protein KaiB of Prochlorococcus marinus (strain NATL2A).